The following is a 340-amino-acid chain: Branched-chain-amino-acid aminotransferase (340 aa).

At Lys-187 the chain carries N6-(pyridoxal phosphate)lysine.

This sequence belongs to the class-IV pyridoxal-phosphate-dependent aminotransferase family. The cofactor is pyridoxal 5'-phosphate.

It carries out the reaction L-leucine + 2-oxoglutarate = 4-methyl-2-oxopentanoate + L-glutamate. The catalysed reaction is L-isoleucine + 2-oxoglutarate = (S)-3-methyl-2-oxopentanoate + L-glutamate. It catalyses the reaction L-valine + 2-oxoglutarate = 3-methyl-2-oxobutanoate + L-glutamate. Its pathway is amino-acid biosynthesis; L-isoleucine biosynthesis; L-isoleucine from 2-oxobutanoate: step 4/4. It functions in the pathway amino-acid biosynthesis; L-leucine biosynthesis; L-leucine from 3-methyl-2-oxobutanoate: step 4/4. The protein operates within amino-acid biosynthesis; L-valine biosynthesis; L-valine from pyruvate: step 4/4. Functionally, acts on leucine, isoleucine and valine. The chain is Branched-chain-amino-acid aminotransferase (ilvE) from Helicobacter pylori (strain J99 / ATCC 700824) (Campylobacter pylori J99).